The sequence spans 1895 residues: Diacylglycerol kinase eta (1895 aa).

Over residues 1–10 (MAHLKLDTLH) the composition is skewed to basic and acidic residues. The disordered stretch occupies residues 1–37 (MAHLKLDTLHVQRSPRGSRRSSPSSGRSSACSSGSIS). Low complexity predominate over residues 20-37 (RSSPSSGRSSACSSGSIS). One can recognise a PH domain in the interval 82–175 (AIIKEGFLLK…WLGSLKTATA (94 aa)). Phorbol-ester/DAG-type zinc fingers lie at residues 195–245 (HHHW…IANC) and 267–318 (PHQW…AVAC). The DAGKc domain occupies 349–485 (GNFSPLLVFV…DRWSIMVFEK (137 aa)). Disordered stretches follow at residues 781–801 (ANIDDAGNRLSPCSDAGENTP), 1012–1053 (TTLC…MARL), 1113–1137 (QHRGGDNDSDYPEHEQTPTNKGANL), and 1172–1191 (PNTILTTSTSPTKKSGHGQD). Residues 1113-1128 (QHRGGDNDSDYPEHEQ) show a composition bias toward basic and acidic residues. The span at 1172–1184 (PNTILTTSTSPTK) shows a compositional bias: polar residues. An SAM domain is found at 1832 to 1895 (WSVNEVVTWL…LQAIKDLSEN (64 aa)).

It belongs to the eukaryotic diacylglycerol kinase family.

The protein resides in the cytoplasm. The catalysed reaction is a 1,2-diacyl-sn-glycerol + ATP = a 1,2-diacyl-sn-glycero-3-phosphate + ADP + H(+). Functionally, phosphorylates diacylglycerol (DAG) to generate phosphatidic acid (PA). In Drosophila melanogaster (Fruit fly), this protein is Diacylglycerol kinase eta.